A 613-amino-acid polypeptide reads, in one-letter code: Dihydroxy-acid dehydratase (613 aa).

Residue Asp81 participates in Mg(2+) binding. Cys122 is a binding site for [2Fe-2S] cluster. 2 residues coordinate Mg(2+): Asp123 and Lys124. Lys124 is modified (N6-carboxylysine). Cys193 lines the [2Fe-2S] cluster pocket. Glu489 is a binding site for Mg(2+). The Proton acceptor role is filled by Ser515.

The protein belongs to the IlvD/Edd family. In terms of assembly, homodimer. Requires [2Fe-2S] cluster as cofactor. It depends on Mg(2+) as a cofactor.

It catalyses the reaction (2R)-2,3-dihydroxy-3-methylbutanoate = 3-methyl-2-oxobutanoate + H2O. The catalysed reaction is (2R,3R)-2,3-dihydroxy-3-methylpentanoate = (S)-3-methyl-2-oxopentanoate + H2O. It participates in amino-acid biosynthesis; L-isoleucine biosynthesis; L-isoleucine from 2-oxobutanoate: step 3/4. The protein operates within amino-acid biosynthesis; L-valine biosynthesis; L-valine from pyruvate: step 3/4. In terms of biological role, functions in the biosynthesis of branched-chain amino acids. Catalyzes the dehydration of (2R,3R)-2,3-dihydroxy-3-methylpentanoate (2,3-dihydroxy-3-methylvalerate) into 2-oxo-3-methylpentanoate (2-oxo-3-methylvalerate) and of (2R)-2,3-dihydroxy-3-methylbutanoate (2,3-dihydroxyisovalerate) into 2-oxo-3-methylbutanoate (2-oxoisovalerate), the penultimate precursor to L-isoleucine and L-valine, respectively. The protein is Dihydroxy-acid dehydratase of Pseudomonas fluorescens (strain SBW25).